The chain runs to 146 residues: Basic phospholipase A2 paradoxin-like alpha chain (146 aa).

The N-terminal stretch at 1-27 (MHPAHLLVLLAVCVSLLGASDIPPLPL) is a signal peptide. 7 disulfides stabilise this stretch: Cys38–Cys99, Cys54–Cys145, Cys56–Cys72, Cys71–Cys126, Cys78–Cys119, Cys88–Cys112, and Cys106–Cys117. Ca(2+)-binding residues include Tyr55, Gly57, and Gly59. His75 is a catalytic residue. Asp76 is a binding site for Ca(2+). Asp120 is an active-site residue.

The protein belongs to the phospholipase A2 family. Group I subfamily. D49 sub-subfamily. Heterotrimer of alpha, beta, and gamma chains; non-covalently linked. Requires Ca(2+) as cofactor. Expressed by the venom gland.

Its subcellular location is the secreted. The enzyme catalyses a 1,2-diacyl-sn-glycero-3-phosphocholine + H2O = a 1-acyl-sn-glycero-3-phosphocholine + a fatty acid + H(+). Heterotrimer: Snake venom phospholipase A2 (PLA2) heterotrimer that acts as a potent presynaptic neurotoxin by blocking synaptic transmission and synaptic vesicle recycling. May act by binding in a calcium-dependent fashion to neurotonal pentraxin-1 (NPTX1) and neurotonal pentraxin-2 (NPTX2), but not to neuronal pentraxin receptor (NPTXR). Also binds to taipoxin-associated calcium binding protein 49 (RCN2), a protein localized in the lumen of endoplasmic reticulum. Its function is as follows. Monomer (alpha chain): Snake venom phospholipase A2 (PLA2) alpha chain that possesses the same high enzymatic activity than the heterotrimer. PLA2 catalyzes the calcium-dependent hydrolysis of the 2-acyl groups in 3-sn-phosphoglycerides. The protein is Basic phospholipase A2 paradoxin-like alpha chain of Oxyuranus microlepidotus (Inland taipan).